The primary structure comprises 1233 residues: Insulin receptor substrate 1 (1233 aa).

S3 is modified (phosphoserine). The mediates interaction with PHIP stretch occupies residues 3–133 (SPPDTDGFSD…AGGGCGGSCS (131 aa)). Positions 12 to 115 (DVRKVGYLRK…WYQALLQLHN (104 aa)) constitute a PH domain. The residue at position 99 (S99) is a Phosphoserine; by CK2. Residues 155–259 (FKEVWQVILK…EAMRAMSDEF (105 aa)) enclose the IRS-type PTB domain. Residues 257–425 (DEFRPRSKSQ…SDGGFISSDE (169 aa)) are disordered. Positions 264–276 (KSQSSSSCSNPIS) are enriched in low complexity. Phosphoserine; by RPS6KB1 is present on residues S265 and S302. S307 carries the phosphoserine; by IKKB, MAPK8 and RPS6KB1 modification. Phosphoserine occurs at positions 318, 325, 340, and 343. The span at 349-358 (THAHRHRGSS) shows a compositional bias: basic residues. 2 stretches are compositionally biased toward low complexity: residues 378–399 (SPSA…GSTS) and 407–419 (SSAS…SDGG). S414 carries the phosphoserine modification. T441 and T448 each carry phosphothreonine. Residue Y460 is modified to Phosphotyrosine; by INSR. Residues 460–463 (YICM) carry the YXXM motif 1 motif. S522 is modified (phosphoserine; by RPS6KB1). Short sequence motifs (YXXM motif) lie at residues 546–549 (YTEM) and 608–611 (YMPM). Phosphotyrosine; by INSR is present on Y608. Position 612 is a phosphoserine (S612). Y628 carries the phosphotyrosine; by INSR modification. Positions 628–631 (YMPM) match the YXXM motif 4 motif. Position 632 is a phosphoserine; by RPS6KB1 and ROCK2 (S632). Positions 651–720 (QRVDPNGYMM…PPVESGGGKL (70 aa)) are disordered. A Phosphotyrosine modification is found at Y658. Positions 658–661 (YMMM) match the YXXM motif 5 motif. The span at 662-689 (SPSGSCSPDIGGGSSSSSSISAAPSGSS) shows a compositional bias: low complexity. The YXXM motif 6 motif lies at 727-730 (YMNM). The tract at residues 766 to 985 (FKHTQRPGEP…VPNSRGDYMT (220 aa)) is disordered. Positions 771-780 (RPGEPEEGAR) are enriched in basic and acidic residues. Composition is skewed to low complexity over residues 785–794 (RLSSSSGRLR) and 801–810 (DSSSSTSSDS). S789 bears the Phosphoserine; by AMPK and SIK2 mark. S887 carries the phosphoserine modification. A phosphotyrosine; by INSR mark is found at Y891, Y935, and Y983. The interval 891–893 (YVN) is GRB2-binding. 3 short sequence motifs (YXXM motif) span residues 935-938 (YMNM), 983-986 (YMTM), and 1006-1009 (YADM). Positions 1015-1137 (AEKASLPRPT…GSEDVKRHSS (123 aa)) are disordered. Low complexity predominate over residues 1032–1042 (STASSSASVTP). Polar residues-rich tracts occupy residues 1043–1052 (QGATAEQATH) and 1069–1081 (TRVN…NQSA). 2 positions are modified to phosphoserine: S1096 and S1097. Positions 1116–1129 (AAVGGSGGGGGGGS) are enriched in gly residues. A Phosphotyrosine; by INSR modification is found at Y1173. The disordered stretch occupies residues 1178-1233 (LAKEHSQDCPSQQQSLPPPPPHQPLGSNEGNSPRRSSEDLSNYASISFQKQPEDRQ). K1180 participates in a covalent cross-link: Glycyl lysine isopeptide (Lys-Gly) (interchain with G-Cter in ubiquitin). Residues 1203–1227 (GSNEGNSPRRSSEDLSNYASISFQK) are compositionally biased toward polar residues. Residue Y1220 is modified to Phosphotyrosine; by INSR.

In terms of assembly, interacts (via phosphorylated YXXM motifs) with PIK3R1. Interacts with ROCK1. Interacts with GRB2. Interacts with SOCS7. Interacts (via IRS-type PTB domain) with IGF1R and INSR (via the tyrosine-phosphorylated NPXY motif). Interacts with UBTF and PIK3CA. Interacts (via PH domain) with PHIP. Interacts with FER. Interacts with ALK. Interacts with EIF2AK2/PKR. Interacts with GKAP1. Interacts with DGKZ in the absence of insulin; insulin stimulation decreases this interaction. Found in a ternary complex with DGKZ and PIP5K1A in the absence of insulin stimulation. Interacts with SQSTM1; the interaction is disrupted by the presence of tensin TNS2. Interacts with NCK1 (via SH2 domain). Interacts with NCK2 (via SH3 domain). Interacts with SH2B1; this interaction enhances leptin-induced activation of the PI3-kinase pathway. Interacts with DVL2; this interaction promotes the Wnt/beta-catenin signaling pathway. Post-translationally, serine phosphorylation of IRS1 is a mechanism for insulin resistance. Ser-307 phosphorylation inhibits insulin action through disruption of IRS1 interaction with the insulin receptor. Phosphorylation of Tyr-891 is required for GRB2-binding. Phosphorylated by ALK. Phosphorylated at Ser-265, Ser-302, Ser-632 and Ser-1097 by RPS6KB1; phosphorylation induces accelerated degradation of IRS1. Phosphorylated on tyrosine residues in response to insulin. In skeletal muscles, dephosphorylated on Tyr-608 by TNS2 under anabolic conditions; dephosphorylation results in the proteasomal degradation of IRS1. In terms of processing, ubiquitinated by the Cul7-RING(FBXW8) complex in a mTOR-dependent manner, leading to its degradation: the Cul7-RING(FBXW8) complex recognizes and binds IRS1 previously phosphorylated by S6 kinase (RPS6KB1 or RPS6KB2). Ubiquitinated by TRAF4 through 'Lys-29' linkage; this ubiquitination regulates the interaction of IRS1 with IGFR and IRS1 tyrosine phosphorylation upon IGF1 stimulation. S-nitrosylation at by BLVRB inhibits its activity. As to expression, expressed in osteoblasts, but not in osteoclasts.

It is found in the cytoplasm. The protein localises to the nucleus. Its function is as follows. Signaling adapter protein that participates in the signal transduction from two prominent receptor tyrosine kinases, insulin receptor/INSR and insulin-like growth factor I receptor/IGF1R. Plays therefore an important role in development, growth, glucose homeostasis as well as lipid metabolism. Upon phosphorylation by the insulin receptor, functions as a signaling scaffold that propagates insulin action through binding to SH2 domain-containing proteins including the p85 regulatory subunit of PI3K, NCK1, NCK2, GRB2 or SHP2. Recruitment of GRB2 leads to the activation of the guanine nucleotide exchange factor SOS1 which in turn triggers the Ras/Raf/MEK/MAPK signaling cascade. Activation of the PI3K/AKT pathway is responsible for most of insulin metabolic effects in the cell, and the Ras/Raf/MEK/MAPK is involved in the regulation of gene expression and in cooperation with the PI3K pathway regulates cell growth and differentiation. Acts a positive regulator of the Wnt/beta-catenin signaling pathway through suppression of DVL2 autophagy-mediated degradation leading to cell proliferation. This is Insulin receptor substrate 1 (Irs1) from Mus musculus (Mouse).